A 434-amino-acid polypeptide reads, in one-letter code: ATP-dependent RNA helicase RhlB (434 aa).

The short motif at 9–37 is the Q motif element; that stretch reads QKFADLGLEPQVLDGLNAKGFINCTPIQA. One can recognise a Helicase ATP-binding domain in the interval 40–219; the sequence is LPVLLAGQDI…FEHMQEPEHV (180 aa). 53–60 provides a ligand contact to ATP; sequence AQTGTGKT. Positions 165 to 168 match the DEAD box motif; that stretch reads DEAD. Positions 245 to 390 constitute a Helicase C-terminal domain; that stretch reads ALLQTLIEEE…QSDYDTSALL (146 aa). The disordered stretch occupies residues 394 to 434; sequence PAPIRLQRRPPQNRRNGSNNGQRQSGNRKHSRPRPPRSPQA. Low complexity predominate over residues 406 to 418; sequence NRRNGSNNGQRQS. The span at 419–428 shows a compositional bias: basic residues; the sequence is GNRKHSRPRP.

This sequence belongs to the DEAD box helicase family. RhlB subfamily. As to quaternary structure, component of the RNA degradosome, which is a multiprotein complex involved in RNA processing and mRNA degradation.

The protein resides in the cytoplasm. The enzyme catalyses ATP + H2O = ADP + phosphate + H(+). Its function is as follows. DEAD-box RNA helicase involved in RNA degradation. Has RNA-dependent ATPase activity and unwinds double-stranded RNA. This chain is ATP-dependent RNA helicase RhlB, found in Aliivibrio salmonicida (strain LFI1238) (Vibrio salmonicida (strain LFI1238)).